The sequence spans 79 residues: Small ribosomal subunit protein bS18 (79 aa).

This sequence belongs to the bacterial ribosomal protein bS18 family. Part of the 30S ribosomal subunit. Forms a tight heterodimer with protein bS6.

Binds as a heterodimer with protein bS6 to the central domain of the 16S rRNA, where it helps stabilize the platform of the 30S subunit. This chain is Small ribosomal subunit protein bS18, found in Nitrobacter winogradskyi (strain ATCC 25391 / DSM 10237 / CIP 104748 / NCIMB 11846 / Nb-255).